Reading from the N-terminus, the 162-residue chain is Transcriptional repressor NrdR (162 aa).

A zinc finger spans residues 3-34 (CPYCHHTDSRVLESRSAEGGQSIRRRRECLAC). Residues 49–139 (ITVIKRNGDR…VYRQFQGISD (91 aa)) form the ATP-cone domain.

The protein belongs to the NrdR family. Zn(2+) is required as a cofactor.

Negatively regulates transcription of bacterial ribonucleotide reductase nrd genes and operons by binding to NrdR-boxes. This Thermosynechococcus vestitus (strain NIES-2133 / IAM M-273 / BP-1) protein is Transcriptional repressor NrdR.